The sequence spans 346 residues: MSHTVADMSRWTGRAEPFETARARYWYQLAQHYAFDSTSQQNGQRIGLVGFACDQGVRRNQGRVGAKAAPPLIRQAFAALPVIAELQQRFDGQLPTLLGDAGDIHCHDNDDFAANMLEQAQLNYADKVSQIIKQGGLPIGLGGGHAIAYGSFLGLWQALQQTDTNSDTDALPRIGIINFDAHLDIRQSDVATSGTPFRQIAEHLDEQGQPFNYCCIGVSRFSNTAALFDRAEQLGVDIISDEDCTNKKWKKIAAQIADFIESVDIIYLTIDMDCLPSSVVPGVSAPAAYGIELSFVERAVKLILCSGKVKVADIAEINPTFDIDSRSCKVAARLLATIIEQHLLNL.

Mn(2+) contacts are provided by H145, D180, H182, D184, D271, and D273.

It belongs to the arginase family. Mn(2+) is required as a cofactor.

It carries out the reaction N-formimidoyl-L-glutamate + H2O = formamide + L-glutamate. The protein operates within amino-acid degradation; L-histidine degradation into L-glutamate; L-glutamate from N-formimidoyl-L-glutamate (hydrolase route): step 1/1. Catalyzes the conversion of N-formimidoyl-L-glutamate to L-glutamate and formamide. This is Formimidoylglutamase from Psychrobacter cryohalolentis (strain ATCC BAA-1226 / DSM 17306 / VKM B-2378 / K5).